Consider the following 296-residue polypeptide: DNA primase small subunit PriS (296 aa).

Catalysis depends on residues aspartate 82, aspartate 84, and aspartate 191.

It belongs to the eukaryotic-type primase small subunit family. In terms of assembly, heterodimer of a small subunit (PriS) and a large subunit (PriL). Mg(2+) serves as cofactor. Mn(2+) is required as a cofactor.

In terms of biological role, catalytic subunit of DNA primase, an RNA polymerase that catalyzes the synthesis of short RNA molecules used as primers for DNA polymerase during DNA replication. The small subunit contains the primase catalytic core and has DNA synthesis activity on its own. Binding to the large subunit stabilizes and modulates the activity, increasing the rate of DNA synthesis while decreasing the length of the DNA fragments, and conferring RNA synthesis capability. The DNA polymerase activity may enable DNA primase to also catalyze primer extension after primer synthesis. May also play a role in DNA repair. The protein is DNA primase small subunit PriS of Methanopyrus kandleri (strain AV19 / DSM 6324 / JCM 9639 / NBRC 100938).